An 88-amino-acid chain; its full sequence is Large ribosomal subunit protein bL31B (88 aa).

Belongs to the bacterial ribosomal protein bL31 family. Type B subfamily. Part of the 50S ribosomal subunit.

This chain is Large ribosomal subunit protein bL31B, found in Corynebacterium diphtheriae (strain ATCC 700971 / NCTC 13129 / Biotype gravis).